Reading from the N-terminus, the 318-residue chain is Putative enoyl-CoA hydratase EchA13 (318 aa).

The segment at 90–110 is disordered; it reads LGSADDIRERSPGPDQHPSYR.

The protein belongs to the enoyl-CoA hydratase/isomerase family.

This is Putative enoyl-CoA hydratase EchA13 (echA13) from Mycobacterium tuberculosis (strain ATCC 25618 / H37Rv).